The sequence spans 156 residues: Cell division protein SepF (156 aa).

The tract at residues 15–58 (SDVVPEDEDDEVIDEEPESSFDTDRSVTPIPAASTQPSTSQRKS) is disordered. Over residues 18 to 35 (VPEDEDDEVIDEEPESSF) the composition is skewed to acidic residues. Polar residues predominate over residues 47–57 (ASTQPSTSQRK).

Belongs to the SepF family. As to quaternary structure, homodimer. Interacts with FtsZ.

The protein localises to the cytoplasm. Cell division protein that is part of the divisome complex and is recruited early to the Z-ring. Probably stimulates Z-ring formation, perhaps through the cross-linking of FtsZ protofilaments. Its function overlaps with FtsA. The polypeptide is Cell division protein SepF (Bifidobacterium animalis subsp. lactis (strain AD011)).